The primary structure comprises 290 residues: UPF0761 membrane protein YihY (290 aa).

A run of 6 helical transmembrane segments spans residues 44 to 64, 104 to 124, 140 to 160, 183 to 203, 210 to 230, and 244 to 264; these read LLSL…FPMF, VGAC…DSAL, FAVY…SLAI, IFPL…VPTI, AIVG…GFAL, and VLAV…IVLL.

Belongs to the UPF0761 family.

The protein localises to the cell inner membrane. This Escherichia coli O139:H28 (strain E24377A / ETEC) protein is UPF0761 membrane protein YihY.